A 514-amino-acid polypeptide reads, in one-letter code: MAYVLTETSAGYALLKASDKKIYKSSSLIQDLDSSDKVLKEFKIAAFSKFNSAANALEEANSIIEGKVSPQLQKLLEEAKKDKKSTLVVSETKLANAINKLGLNFNVVSDAVTLDIYRAVKEYLPDLLPGLNDTDLSKMSLGLAHSIGRHKLKFSADKVDVMIIQAIALLDDLDKELNTYAMRCKEWYGWHFPELAKIVTDSVAYARIILAMGVRSKCADTDLSEILPEEVEERVKTAAEVSMGTEITETDLDNIKALADQIVDFAAYREQLSNYLSSRMKAIAPNLTQLVGELVGARLIAHSGSLISLAKSPASTIQILGAEKALFRALKTKHDTPKYGLLYHASLVGQATGKNKGKIARVLAAKAAVSLRYDALAEDRDDSGDIGLEARAKVENRLSQLEGRDLRTTPKVVREAKKVEITEARAYNADADTAAVEESASDSDDEEEEEDKKKEKKEKKDKKDKKDKKDKKDKKRKRDEEDEEKKESKKSKKDKKEKKEKKDKKDKKSKKEKK.

Residues 283-403 (IAPNLTQLVG…VENRLSQLEG (121 aa)) form the Nop domain. Positions 430–514 (DADTAAVEES…KDKKSKKEKK (85 aa)) are disordered. The span at 439-450 (SASDSDDEEEEE) shows a compositional bias: acidic residues. Basic residues-rich tracts occupy residues 454–477 (KEKKEKKDKKDKKDKKDKKDKKRK) and 488–514 (SKKSKKDKKEKKEKKDKKDKKSKKEKK).

Belongs to the NOP5/NOP56 family.

It is found in the nucleus. Its subcellular location is the nucleolus. In terms of biological role, required for pre-18S rRNA processing. May bind microtubules. The polypeptide is Nucleolar protein 58 (NOP58) (Vanderwaltozyma polyspora (strain ATCC 22028 / DSM 70294 / BCRC 21397 / CBS 2163 / NBRC 10782 / NRRL Y-8283 / UCD 57-17) (Kluyveromyces polysporus)).